The primary structure comprises 483 residues: NADPH:adrenodoxin oxidoreductase, mitochondrial (483 aa).

The transit peptide at 1 to 14 (MSRYLARYMVSRYF) directs the protein to the mitochondrion. 4 residues coordinate FAD: A32, D53, L61, and L97. NADP(+) is bound by residues 169 to 172 (QGNV), 213 to 214 (RR), and E225. FAD contacts are provided by residues W391 and 398–400 (GII). G398 lines the NADP(+) pocket.

Belongs to the ferredoxin--NADP reductase type 1 family. Requires FAD as cofactor.

It localises to the mitochondrion. The enzyme catalyses 2 reduced [adrenodoxin] + NADP(+) + H(+) = 2 oxidized [adrenodoxin] + NADPH. In terms of biological role, associates in vitro with the adrenodoxin-like protein MFDX1 to form an efficient low potential electron transfer chain that is able to reduce cytochrome C. Functions as accessory mitochondrial protein involved with BIO2 in the plant biotin synthase reaction. This chain is NADPH:adrenodoxin oxidoreductase, mitochondrial, found in Arabidopsis thaliana (Mouse-ear cress).